The following is a 232-amino-acid chain: ATP phosphoribosyltransferase (232 aa).

This sequence belongs to the ATP phosphoribosyltransferase family. Short subfamily. Heteromultimer composed of HisG and HisZ subunits.

It localises to the cytoplasm. It carries out the reaction 1-(5-phospho-beta-D-ribosyl)-ATP + diphosphate = 5-phospho-alpha-D-ribose 1-diphosphate + ATP. The protein operates within amino-acid biosynthesis; L-histidine biosynthesis; L-histidine from 5-phospho-alpha-D-ribose 1-diphosphate: step 1/9. In terms of biological role, catalyzes the condensation of ATP and 5-phosphoribose 1-diphosphate to form N'-(5'-phosphoribosyl)-ATP (PR-ATP). Has a crucial role in the pathway because the rate of histidine biosynthesis seems to be controlled primarily by regulation of HisG enzymatic activity. This chain is ATP phosphoribosyltransferase (hisG), found in Mesorhizobium japonicum (strain LMG 29417 / CECT 9101 / MAFF 303099) (Mesorhizobium loti (strain MAFF 303099)).